A 599-amino-acid chain; its full sequence is Elongation factor 4 (599 aa).

In terms of domain architecture, tr-type G spans 5-187; the sequence is SHIRNFSIIA…RLVHTIPAPE (183 aa). Residues 17 to 22 and 134 to 137 contribute to the GTP site; these read DHGKST and NKMD.

This sequence belongs to the TRAFAC class translation factor GTPase superfamily. Classic translation factor GTPase family. LepA subfamily.

The protein localises to the cell inner membrane. The catalysed reaction is GTP + H2O = GDP + phosphate + H(+). In terms of biological role, required for accurate and efficient protein synthesis under certain stress conditions. May act as a fidelity factor of the translation reaction, by catalyzing a one-codon backward translocation of tRNAs on improperly translocated ribosomes. Back-translocation proceeds from a post-translocation (POST) complex to a pre-translocation (PRE) complex, thus giving elongation factor G a second chance to translocate the tRNAs correctly. Binds to ribosomes in a GTP-dependent manner. The protein is Elongation factor 4 of Pseudomonas putida (strain ATCC 47054 / DSM 6125 / CFBP 8728 / NCIMB 11950 / KT2440).